The chain runs to 339 residues: Small ribosomal subunit biogenesis GTPase RsgA (339 aa).

One can recognise a CP-type G domain in the interval 111-271 (MRGLLKPVAA…LIDSPGIREF (161 aa)). GTP is bound by residues 159–162 (NKAD) and 213–221 (GQSGVGKSS). Residues cysteine 295, cysteine 300, histidine 302, and cysteine 308 each coordinate Zn(2+).

This sequence belongs to the TRAFAC class YlqF/YawG GTPase family. RsgA subfamily. Monomer. Associates with 30S ribosomal subunit, binds 16S rRNA. It depends on Zn(2+) as a cofactor.

The protein resides in the cytoplasm. One of several proteins that assist in the late maturation steps of the functional core of the 30S ribosomal subunit. Helps release RbfA from mature subunits. May play a role in the assembly of ribosomal proteins into the subunit. Circularly permuted GTPase that catalyzes slow GTP hydrolysis, GTPase activity is stimulated by the 30S ribosomal subunit. In Pseudomonas aeruginosa (strain LESB58), this protein is Small ribosomal subunit biogenesis GTPase RsgA.